The chain runs to 284 residues: Avenin-like b6 (284 aa).

The signal sequence occupies residues 1-18 (MKVFILALLALAATTAIA).

Belongs to the prolamin family. In terms of processing, contains disulfide bonds.

Functionally, seed storage protein. Might be integrated via inter-chain disulfide bonds within the glutenin polymer. This chain is Avenin-like b6, found in Triticum aestivum (Wheat).